The following is a 122-amino-acid chain: Small ribosomal subunit protein uS13 (122 aa).

The disordered stretch occupies residues 95 to 122 (GLPVRGQRTHTNARTRKGPAKSIAGKKK).

It belongs to the universal ribosomal protein uS13 family. Part of the 30S ribosomal subunit. Forms a loose heterodimer with protein S19. Forms two bridges to the 50S subunit in the 70S ribosome.

Functionally, located at the top of the head of the 30S subunit, it contacts several helices of the 16S rRNA. In the 70S ribosome it contacts the 23S rRNA (bridge B1a) and protein L5 of the 50S subunit (bridge B1b), connecting the 2 subunits; these bridges are implicated in subunit movement. Contacts the tRNAs in the A and P-sites. The sequence is that of Small ribosomal subunit protein uS13 from Rhodopseudomonas palustris (strain BisB18).